Reading from the N-terminus, the 187-residue chain is Transcription antitermination protein NusB (187 aa).

The interval 135–187 (APAPESVAEEADEESSDSDAAASDPTDEGDVSDSSGASDEPAAPSAEIQPTVD) is disordered. Residues 141–151 (VAEEADEESSD) are compositionally biased toward acidic residues.

Belongs to the NusB family.

Its function is as follows. Involved in transcription antitermination. Required for transcription of ribosomal RNA (rRNA) genes. Binds specifically to the boxA antiterminator sequence of the ribosomal RNA (rrn) operons. This chain is Transcription antitermination protein NusB, found in Bifidobacterium longum subsp. infantis (strain ATCC 15697 / DSM 20088 / JCM 1222 / NCTC 11817 / S12).